A 699-amino-acid chain; its full sequence is tRNA 5-methylaminomethyl-2-thiouridine biosynthesis bifunctional protein MnmC (699 aa).

A tRNA (mnm(5)s(2)U34)-methyltransferase region spans residues 1–247 (MPAVSRPLPP…KREMLCGEIA (247 aa)). Residues 275 to 699 (IGAGLAGTSV…QPSPTTTETP (425 aa)) are FAD-dependent cmnm(5)s(2)U34 oxidoreductase. The interval 675 to 699 (RGNATLSTSSPNDDAQPSPTTTETP) is disordered.

This sequence in the N-terminal section; belongs to the methyltransferase superfamily. tRNA (mnm(5)s(2)U34)-methyltransferase family. The protein in the C-terminal section; belongs to the DAO family. FAD is required as a cofactor.

The protein localises to the cytoplasm. It carries out the reaction 5-aminomethyl-2-thiouridine(34) in tRNA + S-adenosyl-L-methionine = 5-methylaminomethyl-2-thiouridine(34) in tRNA + S-adenosyl-L-homocysteine + H(+). In terms of biological role, catalyzes the last two steps in the biosynthesis of 5-methylaminomethyl-2-thiouridine (mnm(5)s(2)U) at the wobble position (U34) in tRNA. Catalyzes the FAD-dependent demodification of cmnm(5)s(2)U34 to nm(5)s(2)U34, followed by the transfer of a methyl group from S-adenosyl-L-methionine to nm(5)s(2)U34, to form mnm(5)s(2)U34. This Chromohalobacter salexigens (strain ATCC BAA-138 / DSM 3043 / CIP 106854 / NCIMB 13768 / 1H11) protein is tRNA 5-methylaminomethyl-2-thiouridine biosynthesis bifunctional protein MnmC.